The primary structure comprises 106 residues: RxLR effector protein PSR1 (106 aa).

Positions 1–20 are cleaved as a signal peptide; sequence MRLTYVLLVAVTTLLVSCDA. Residues 33 to 46 carry the RxLR-dEER motif; sequence RLLRFVEAADEEER. The segment at 50 to 106 is WY domain; sequence FSPEKLRKMLGDETYRLKKFGKWDSDGHTFDGLKHYLLLSDSSMVKLRNMYKAWLEQ. A Bipartite nuclear localization signal (NLS) motif is present at residues 56–69; it reads RKMLGDETYRLKKF.

It belongs to the RxLR effector family. As to quaternary structure, interacts with host PINP1.

It localises to the secreted. Its subcellular location is the host nucleus. Secreted effector that possesses RNA silencing suppression activity by inhibiting the biogenesis of small RNAs in the host plant to promote enhanced susceptibility of host to the pathogen during infection. Interferes with secondary siRNA production by associating with host nuclear protein PINP1 that acts as a regulator of the accumulation of both microRNAs and endogenous small interfering RNAs. This chain is RxLR effector protein PSR1, found in Phytophthora sojae (Soybean stem and root rot agent).